A 163-amino-acid polypeptide reads, in one-letter code: Arginine repressor (163 aa).

This sequence belongs to the ArgR family.

Its subcellular location is the cytoplasm. The protein operates within amino-acid biosynthesis; L-arginine biosynthesis [regulation]. Regulates arginine biosynthesis genes. The protein is Arginine repressor of Corynebacterium diphtheriae (strain ATCC 700971 / NCTC 13129 / Biotype gravis).